A 239-amino-acid chain; its full sequence is Large ribosomal subunit protein uL1 (239 aa).

The protein belongs to the universal ribosomal protein uL1 family. As to quaternary structure, part of the 50S ribosomal subunit.

Binds directly to 23S rRNA. The L1 stalk is quite mobile in the ribosome, and is involved in E site tRNA release. Functionally, protein L1 is also a translational repressor protein, it controls the translation of the L11 operon by binding to its mRNA. The polypeptide is Large ribosomal subunit protein uL1 (Acidothermus cellulolyticus (strain ATCC 43068 / DSM 8971 / 11B)).